The sequence spans 273 residues: Dermonecrotic toxin (273 aa).

2 residues coordinate Mg(2+): Glu20 and Asp22. His35 functions as the Nucleophile in the catalytic mechanism. Cys39 and Cys45 are oxidised to a cystine. Asp79 contacts Mg(2+).

The protein belongs to the arthropod phospholipase D family. Class I subfamily. It depends on Mg(2+) as a cofactor. As to expression, expressed by the venom gland.

It localises to the secreted. It carries out the reaction an N-(acyl)-sphingosylphosphocholine = an N-(acyl)-sphingosyl-1,3-cyclic phosphate + choline. The catalysed reaction is an N-(acyl)-sphingosylphosphoethanolamine = an N-(acyl)-sphingosyl-1,3-cyclic phosphate + ethanolamine. The enzyme catalyses a 1-acyl-sn-glycero-3-phosphocholine = a 1-acyl-sn-glycero-2,3-cyclic phosphate + choline. It catalyses the reaction a 1-acyl-sn-glycero-3-phosphoethanolamine = a 1-acyl-sn-glycero-2,3-cyclic phosphate + ethanolamine. Functionally, dermonecrotic toxins cleave the phosphodiester linkage between the phosphate and headgroup of certain phospholipids (sphingolipid and lysolipid substrates), forming an alcohol (often choline) and a cyclic phosphate. This toxin acts on sphingomyelin (SM). It may also act on ceramide phosphoethanolamine (CPE), lysophosphatidylcholine (LPC) and lysophosphatidylethanolamine (LPE), but not on lysophosphatidylserine (LPS), and lysophosphatidylglycerol (LPG). It acts by transphosphatidylation, releasing exclusively cyclic phosphate products as second products. Induces dermonecrosis, hemolysis, increased vascular permeability, edema, inflammatory response, and platelet aggregation. This is Dermonecrotic toxin from Loxosceles laeta (South American recluse spider).